The following is a 288-amino-acid chain: Small ribosomal subunit protein uS2 (288 aa).

Residues 267–288 (EEVEEVEEEFIPSEIEDEDEKF) are disordered.

The protein belongs to the universal ribosomal protein uS2 family.

The sequence is that of Small ribosomal subunit protein uS2 from Petrotoga mobilis (strain DSM 10674 / SJ95).